We begin with the raw amino-acid sequence, 1688 residues long: Voltage-dependent L-type calcium channel subunit alpha-1S (1688 aa).

Positions 1-24 are disordered; that stretch reads MDAMGSAAEEGTQKKKRRPLVPPP. Over 1–51 the chain is Cytoplasmic; the sequence is MDAMGSAAEEGTQKKKRRPLVPPPPRPPRALFCLGLQNPFRKFCINIVEWK. The stretch at 38–335 is one I repeat; sequence NPFRKFCINI…LVLGVLSGEF (298 aa). The chain crosses the membrane as a helical span at residues 52 to 70; the sequence is PFEMIILLTIFANCVALAI. Residues 71–88 lie on the Extracellular side of the membrane; that stretch reads FLPMPEDDTNSTNSVLEK. The N-linked (GlcNAc...) asparagine glycan is linked to Asn80. Residues 89–108 form a helical membrane-spanning segment; that stretch reads VEYIFLFIFTIESFLKIVAY. Residues 109 to 120 are Cytoplasmic-facing; the sequence is GFILHTDAYLRN. Residues 121 to 139 traverse the membrane as a helical segment; that stretch reads GWNILDFTIVSVGVFSVLL. At 140–158 the chain is on the extracellular side; sequence EQISKLQGLPAPGKSSGFN. Residues 159-177 form a helical membrane-spanning segment; the sequence is VKALRAFRVLRPLRLVSGV. Topologically, residues 178-196 are cytoplasmic; sequence PSLQVVLNSIIKAMIPLLH. Residues 197 to 216 traverse the membrane as a helical segment; the sequence is IALLVLFMIIIYAIVGLELF. The Extracellular portion of the chain corresponds to 217–307; that stretch reads SGKMHKTCYF…WVNDAIGNEW (91 aa). The N-linked (GlcNAc...) asparagine glycan is linked to Asn255. Glu290 is a Ca(2+) binding site. The helical transmembrane segment at 308–332 threads the bilayer; it reads PWIYFVSLILLGSFFVLNLVLGVLS. The Cytoplasmic portion of the chain corresponds to 333–431; it reads GEFTKEREKA…RKSRDLVKSR (99 aa). The binding to the beta subunit stretch occupies residues 355 to 372; it reads QAMDEDLRGYLDWITHAE. Residues 417–663 form an II repeat; that stretch reads HRLLRRKSRD…VFLAIAVDNL (247 aa). A helical membrane pass occupies residues 432 to 450; the sequence is FFYWLVIIIILLNTVIIAT. Topologically, residues 451 to 465 are extracellular; sequence EHHHQPDSLTKAQDI. A helical membrane pass occupies residues 466 to 485; it reads ANEVLLALFTMEMIVKIYAL. Topologically, residues 486–493 are cytoplasmic; the sequence is GFQSYFMS. The chain crosses the membrane as a helical span at residues 494 to 512; it reads LFNRFDSFVVCTGLLEVML. Over 513 to 522 the chain is Extracellular; sequence VASDIMSPLG. Residues 523 to 541 traverse the membrane as a helical segment; it reads ISVLRCIRLLRIFKITRYW. Residues 542-560 are Cytoplasmic-facing; that stretch reads TSLNNLVASLLNSVRSIAS. A helical membrane pass occupies residues 561-580; sequence LLLLLFLFMIIFALLGMQMF. Residues 581–635 lie on the Extracellular side of the membrane; it reads GGKFDFEDLEVRRSTFDTFPQALITVFQILTGEDWTAVMYNGIMAYGGPTYSGMS. A Ca(2+)-binding site is contributed by Glu613. A helical transmembrane segment spans residues 636-660; the sequence is VCIYFIILFVCGNYILLNVFLAIAV. Residues 661–797 are Cytoplasmic-facing; sequence DNLAEAENLT…VLCHRIINAT (137 aa). Disordered stretches follow at residues 672–696 and 729–755; these read AQKA…TEEE and EIKD…ISPR. Acidic residues predominate over residues 740–749; it reads PGDDEEEEPE. The stretch at 784–1066 is one III repeat; that stretch reads NKIRVLCHRI…IFVGFVIVTF (283 aa). A helical transmembrane segment spans residues 798 to 816; that stretch reads TFTNFILLFILLSSISLAA. Residues 817 to 832 lie on the Extracellular side of the membrane; the sequence is EDPIQPESFRNKVLSK. A helical transmembrane segment spans residues 833–852; that stretch reads LDIVFTVIFTTEIVLKMTAY. Residues 853–864 lie on the Cytoplasmic side of the membrane; it reads GAFLHKGSFCRN. Residues 865-883 form a helical membrane-spanning segment; sequence SFNILDLSVVGVSLISMGI. Residues 884 to 890 lie on the Extracellular side of the membrane; that stretch reads ESSAISV. A helical membrane pass occupies residues 891–909; sequence VKILRVLRVLRPLRAINRA. Topologically, residues 910-928 are cytoplasmic; it reads KGLKHVVQCLFVAIKTIGN. A helical membrane pass occupies residues 929–948; it reads IVLVTTLLQFMFSCIGVQLF. Residues 949 to 1038 are Extracellular-facing; it reads KGKFYSCTDT…MGPIYNYRIE (90 aa). The interval 986–1075 is dihydropyridine binding; it reads RVWSHSDFHF…FQEQGEQEYK (90 aa). Glu1012 contacts Ca(2+). The chain crosses the membrane as a helical span at residues 1039–1063; it reads IAVFFIVYIILIAFFMMNIFVGFVI. Residues 1064 to 1116 lie on the Cytoplasmic side of the membrane; sequence VTFQEQGEQEYKDCELDKNQRQCVQYALKARPLRRYIPKNPHQYKIWYVVTSS. One copy of the IV repeat lies at 1103–1371; the sequence is NPHQYKIWYV…LFVAVIMDNF (269 aa). Residues 1117-1135 traverse the membrane as a helical segment; the sequence is YFEYLMFFLITLNTISLGM. Over 1136 to 1150 the chain is Extracellular; sequence QHYGQTAEFSYMSDI. The helical transmembrane segment at 1151–1170 threads the bilayer; the sequence is LNVAFTGIFTVEMFLKLAAF. Topologically, residues 1171–1178 are cytoplasmic; the sequence is KAKGYFGD. A helical transmembrane segment spans residues 1179–1197; that stretch reads PWNVFDFLIVIGSVIDVIL. Over 1198–1218 the chain is Extracellular; sequence SEIDTPGIPATPGAEESSRIS. Residues 1219–1237 traverse the membrane as a helical segment; the sequence is ITFFRLFRVLRLVKLLSRG. The Cytoplasmic segment spans residues 1238-1256; sequence EGVRTLLWTFIKSFQALPY. The chain crosses the membrane as a helical span at residues 1257–1276; sequence VALLIVMLFFIYAVIGMQVF. Residues 1277-1343 are Extracellular-facing; that stretch reads GKIALVDGTH…GEEYTCGTSF (67 aa). The tract at residues 1324–1390 is dihydropyridine binding; it reads LCDPMSDFQP…LGPHHLDEFK (67 aa). The phenylalkylamine binding stretch occupies residues 1336 to 1379; the sequence is EYTCGTSFAYFYFISFYMLCAFLIINLFVAVIMDNFDYLTRDWS. The helical transmembrane segment at 1344-1368 threads the bilayer; the sequence is AYFYFISFYMLCAFLIINLFVAVIM. At 1369 to 1688 the chain is on the cytoplasmic side; it reads DNFDYLTRDW…TNSSISQATN (320 aa). 2 disordered regions span residues 1635–1664 and 1669–1688; these read PEPV…RLTT and RVQQ…QATN. Polar residues predominate over residues 1678–1688; the sequence is DTNSSISQATN.

Belongs to the calcium channel alpha-1 subunit (TC 1.A.1.11) family. As to quaternary structure, multisubunit complex consisting of alpha-1, alpha-2, beta and delta subunits in a 1:1:1:1 ratio. The channel activity is directed by the pore-forming and voltage-sensitive alpha-1 subunit. In many cases, this subunit is sufficient to generate voltage-sensitive calcium channel activity. The auxiliary subunits beta and alpha-2/delta linked by a disulfide bridge regulate the channel activity. An additional gamma subunit is present only in skeletal muscle L-type channel. Post-translationally, phosphorylation by PKA stimulates the calcium channel function. As to expression, skeletal muscle specific.

It is found in the membrane. Its function is as follows. Voltage-sensitive calcium channels (VSCC) mediate the entry of calcium ions into excitable cells and are also involved in a variety of calcium-dependent processes, including muscle contraction, gene expression, cell motility, cell division and cell death. The isoform alpha-1S gives rise to L-type calcium currents. Long-lasting (L-type) calcium channels belong to the 'high-voltage activated' (HVA) group. They are blocked by dihydropyridines (DHP), phenylalkylamines, and by benzothiazepines. Calcium channels containing the alpha-1S subunit play an important role in excitation-contraction coupling in skele|tal muscle. The chain is Voltage-dependent L-type calcium channel subunit alpha-1S from Aquarana catesbeiana (American bullfrog).